The chain runs to 648 residues: MVSLPPPQSDVTLPGPTRLEGERQGDLMQAPGLPGSPAPQSKHAGFSCSSFVSDGPPERTPSLPPHSPRIASPGPEQVQGHCPAGPGPGPFRLSPSDKYPGFGFEEAAASSPGRFLKGSHAPFHPYKRPFHEDVFPEAETTLALKGHSFKTPGPLEAFEEIPVDVAEAEAFLPGFSAEAWCNGLPYPSQEHGPQVLGSEVKVKPPVLESGAGMFCYQPPLQHMYCSSQPPFHQYSPGGGSYPIPYLGSSHYQYQRMAPQASTDGHQPLFPKPIYSYSILIFMALKNSKTGSLPVSEIYNFMTEHFPYFKTAPDGWKNSVRHNLSLNKCFEKVENKSGSSSRKGCLWALNPAKIDKMQEELQKWKRKDPIAVRKSMAKPEELDSLIGDKREKLGSPLLGCPPPGLSGSGPIRPLAPPAGLSPPLHSLHPAPGPIPGKNPLQDLLMGHTPSCYGQTYLHLSPGLAPPGPPQPLFPQPDGHLELRAQPGTPQDSPLPAHTPPSHSAKLLAEPSPARTMHDTLLPDGDLGTDLDAINPSLTDFDFQGNLWEQLKDDSLALDPLVLVTSSPTSSSMPPPQPPPHCFPPGPCLTETGSGAGDLAAPGSGGSGALGDLHLTTLYSAFMELEPTPPTAPAGPSVYLSPSSKPVALA.

The disordered stretch occupies residues 1-105 (MVSLPPPQSD…SDKYPGFGFE (105 aa)). Over residues 58 to 67 (ERTPSLPPHS) the composition is skewed to pro residues. Positions 271–367 (KPIYSYSILI…EELQKWKRKD (97 aa)) form a DNA-binding region, fork-head. Disordered stretches follow at residues 392 to 445 (LGSP…LLMG), 458 to 508 (LSPG…LLAE), and 623 to 648 (LEPT…VALA). Positions 462-473 (LAPPGPPQPLFP) are enriched in pro residues.

Expressed in thymus.

Its subcellular location is the nucleus. Its function is as follows. Transcriptional regulator which regulates the development, differentiation, and function of thymic epithelial cells (TECs) both in the prenatal and postnatal thymus. Acts as a master regulator of the TECs lineage development and is required from the onset of differentiation in progenitor TECs in the developing fetus to the final differentiation steps through which TECs mature to acquire their full functionality. Regulates, either directly or indirectly the expression of a variety of genes that mediate diverse aspects of thymus development and function, including MHC Class II, DLL4, CCL25, CTSL, CD40 and PAX1. Regulates the differentiation of the immature TECs into functional cortical TECs (cTECs) and medullary TECs (mTECs). Essential for maintenance of mTECs population in the postnatal thymus. Involved in the morphogenesis and maintenance of the three-dimensional thymic microstructure which is necessary for a fully functional thymus. Plays an important role in the maintenance of hematopoiesis and particularly T lineage progenitors within the bone marrow niche with age. Essential for the vascularization of the thymus anlage. Promotes the terminal differentiation of epithelial cells in the epidermis and hair follicles, partly by negatively regulating the activity of protein kinase C. Plays a crucial role in the early prenatal stages of T-cell ontogeny. The sequence is that of Forkhead box protein N1 (FOXN1) from Homo sapiens (Human).